The chain runs to 121 residues: MGNLIKELQDEQCRTDLADFCVGDTIRVATNISEGGKERVQVFQGTVMARKGGGAGETVSLHRVAYGEGMEKSFLLNSPKIVSIEVVKRGKVSRARLFYLRGKTGKAAKVKELIGSRAAKK.

This sequence belongs to the bacterial ribosomal protein bL19 family.

Functionally, this protein is located at the 30S-50S ribosomal subunit interface and may play a role in the structure and function of the aminoacyl-tRNA binding site. The protein is Large ribosomal subunit protein bL19 of Chlamydia trachomatis serovar L2 (strain ATCC VR-902B / DSM 19102 / 434/Bu).